The following is a 144-amino-acid chain: MRLNTLSPAAGAKSAAKRVGRGIGSGTGKTCGRGHKGQKSRSGGGVRVGFEGGQMPLKIRLPKFGFTSRRALVTAEVRISELAKVNGDVVDLNALKDANLVTRNIQFAKIVLSGTIERPVTVKGLKVTKGARAAIEAAGGKIEE.

The tract at residues 1–49 (MRLNTLSPAAGAKSAAKRVGRGIGSGTGKTCGRGHKGQKSRSGGGVRVG) is disordered. Gly residues predominate over residues 21–31 (RGIGSGTGKTC).

The protein belongs to the universal ribosomal protein uL15 family. Part of the 50S ribosomal subunit.

In terms of biological role, binds to the 23S rRNA. In Shewanella sediminis (strain HAW-EB3), this protein is Large ribosomal subunit protein uL15.